We begin with the raw amino-acid sequence, 102 residues long: Co-chaperonin GroES (102 aa).

This sequence belongs to the GroES chaperonin family. Heptamer of 7 subunits arranged in a ring. Interacts with the chaperonin GroEL.

The protein resides in the cytoplasm. Together with the chaperonin GroEL, plays an essential role in assisting protein folding. The GroEL-GroES system forms a nano-cage that allows encapsulation of the non-native substrate proteins and provides a physical environment optimized to promote and accelerate protein folding. GroES binds to the apical surface of the GroEL ring, thereby capping the opening of the GroEL channel. In Streptomyces avermitilis (strain ATCC 31267 / DSM 46492 / JCM 5070 / NBRC 14893 / NCIMB 12804 / NRRL 8165 / MA-4680), this protein is Co-chaperonin GroES.